A 397-amino-acid polypeptide reads, in one-letter code: tRNA-specific 2-thiouridylase MnmA (397 aa).

ATP is bound by residues 19 to 26 (AMSGGVDS) and L45. C113 acts as the Nucleophile in catalysis. Residues C113 and C210 are joined by a disulfide bond. Residue G137 participates in ATP binding. The interval 160 to 162 (RDQ) is interaction with tRNA. C210 serves as the catalytic Cysteine persulfide intermediate.

This sequence belongs to the MnmA/TRMU family.

It localises to the cytoplasm. The enzyme catalyses S-sulfanyl-L-cysteinyl-[protein] + uridine(34) in tRNA + AH2 + ATP = 2-thiouridine(34) in tRNA + L-cysteinyl-[protein] + A + AMP + diphosphate + H(+). In terms of biological role, catalyzes the 2-thiolation of uridine at the wobble position (U34) of tRNA, leading to the formation of s(2)U34. The polypeptide is tRNA-specific 2-thiouridylase MnmA (Bradyrhizobium sp. (strain BTAi1 / ATCC BAA-1182)).